The chain runs to 258 residues: Small ribosomal subunit protein mS35 (258 aa).

Residues 1 to 39 constitute a mitochondrion transit peptide; sequence MAFNPLLSLLKADAIFLGQLSKSSFCATSRAFSVFYFTR.

It belongs to the mitochondrion-specific ribosomal protein mS35 family. Component of the mitochondrial small ribosomal subunit (mt-SSU). Mature yeast 74S mitochondrial ribosomes consist of a small (37S) and a large (54S) subunit. The 37S small subunit contains a 15S ribosomal RNA (15S mt-rRNA) and at least 32 different proteins. The 54S large subunit contains a 21S rRNA (21S mt-rRNA) and at least 45 different proteins.

Its subcellular location is the mitochondrion. Its function is as follows. Component of the mitochondrial ribosome (mitoribosome), a dedicated translation machinery responsible for the synthesis of mitochondrial genome-encoded proteins, including at least some of the essential transmembrane subunits of the mitochondrial respiratory chain. The mitoribosomes are attached to the mitochondrial inner membrane and translation products are cotranslationally integrated into the membrane. The polypeptide is Small ribosomal subunit protein mS35 (rsm24) (Schizosaccharomyces pombe (strain 972 / ATCC 24843) (Fission yeast)).